Consider the following 504-residue polypeptide: Cystathionine beta-synthase (504 aa).

Cys12 and His23 together coordinate heme. Lys78 carries the N6-(pyridoxal phosphate)lysine modification. Residues Asn108, Gly215–Thr219, and Ser307 contribute to the pyridoxal 5'-phosphate site. 2 consecutive CBS domains span residues Leu375–Cys434 and Met442–Ser498.

This sequence belongs to the cysteine synthase/cystathionine beta-synthase family. In terms of assembly, homodimer. Pyridoxal 5'-phosphate is required as a cofactor.

The enzyme catalyses L-homocysteine + L-serine = L,L-cystathionine + H2O. It functions in the pathway amino-acid biosynthesis; L-cysteine biosynthesis; L-cysteine from L-homocysteine and L-serine: step 1/2. Its activity is regulated as follows. Has no response to S-adenosyl-methionine/AdoMet, unlike mammalian orthologs. Binds non-covalently to a heme group that may control the redox sensitivity of the enzyme. Hydro-lyase catalyzing the first step of the transsulfuration pathway, where the hydroxyl group of L-serine is displaced by L-homocysteine in a beta-replacement reaction to form L-cystathionine, the precursor of L-cysteine. The protein is Cystathionine beta-synthase of Apis mellifera (Honeybee).